The primary structure comprises 1094 residues: Protein phosphatase 2C and cyclic nucleotide-binding/kinase domain-containing protein (1094 aa).

Positions 107–397 (RCSFLSQRGY…DDITIIVVHI (291 aa)) constitute a PPM-type phosphatase domain. D148, G149, D344, and D388 together coordinate Mn(2+). A nucleoside 3',5'-cyclic phosphate-binding positions include 491-616 (LFRK…RSVD) and 617-758 (LLSR…RHSS). The Protein kinase domain maps to 785–1038 (TTCLSTTDCS…PESIKKHPWF (254 aa)). Residues 791-799 (TDCSEIGLV) and K811 each bind ATP.

This sequence in the N-terminal section; belongs to the PP2C family. It in the C-terminal section; belongs to the protein kinase superfamily. AGC Ser/Thr protein kinase family. The cofactor is Mg(2+). Mn(2+) is required as a cofactor.

It catalyses the reaction O-phospho-L-seryl-[protein] + H2O = L-seryl-[protein] + phosphate. The enzyme catalyses O-phospho-L-threonyl-[protein] + H2O = L-threonyl-[protein] + phosphate. This Arabidopsis thaliana (Mouse-ear cress) protein is Protein phosphatase 2C and cyclic nucleotide-binding/kinase domain-containing protein.